The chain runs to 274 residues: Large ribosomal subunit protein uL2cz/uL2cy (274 aa).

Disordered stretches follow at residues 1–21 (MAIHLYKTSTPSTRNGAVDSQ) and 224–274 (NPVD…RRSK).

This sequence belongs to the universal ribosomal protein uL2 family. As to quaternary structure, part of the 50S ribosomal subunit.

The protein resides in the plastid. Its subcellular location is the chloroplast. This is Large ribosomal subunit protein uL2cz/uL2cy (rpl2-A) from Populus trichocarpa (Western balsam poplar).